The sequence spans 144 residues: Transcription antitermination protein NusB (144 aa).

Belongs to the NusB family.

Involved in transcription antitermination. Required for transcription of ribosomal RNA (rRNA) genes. Binds specifically to the boxA antiterminator sequence of the ribosomal RNA (rrn) operons. The polypeptide is Transcription antitermination protein NusB (Buchnera aphidicola subsp. Baizongia pistaciae (strain Bp)).